The primary structure comprises 760 residues: Probable myosin-binding protein 4 (760 aa).

Residues 26 to 46 (WFLILLMFIDALLSYLLVWFA) form a helical membrane-spanning segment. Disordered stretches follow at residues 161–189 (SRGR…SLKK), 247–273 (SEKR…QPVL), 292–311 (SMLG…VKAK), and 348–595 (EAEV…KHSA). A compositionally biased stretch (low complexity) spans 352-366 (SGSSSPSGGEFLSPS). A compositionally biased stretch (basic and acidic residues) spans 371-383 (ASREIRIQEHDDS). A compositionally biased stretch (polar residues) spans 385–394 (DFSQNITSSA). A coiled-coil region spans residues 388–416 (QNITSSAMEIEEFEAAIEQKESDHMDVSG). The span at 404–413 (IEQKESDHMD) shows a compositional bias: basic and acidic residues. 2 stretches are compositionally biased toward acidic residues: residues 446 to 458 (LEQE…ESEV) and 517 to 526 (EEDVDNEESE). 2 stretches are compositionally biased toward basic and acidic residues: residues 537–550 (VKEE…HGDH) and 562–580 (SKEE…KITE). Residues 611–709 (SLVEVLKQQL…DLEMELEYYR (99 aa)) enclose the GTD-binding domain. The disordered stretch occupies residues 725 to 760 (GILGNTEETNVTSPTDETSIKDSTDTKLTGSPSAEN). 2 stretches are compositionally biased toward polar residues: residues 730-741 (TEETNVTSPTDE) and 750-760 (TKLTGSPSAEN).

The protein localises to the endomembrane system. Its function is as follows. Membrane-anchored myosin receptors that define a distinct, plant-specific transport vesicle compartment. In Arabidopsis thaliana (Mouse-ear cress), this protein is Probable myosin-binding protein 4.